A 634-amino-acid polypeptide reads, in one-letter code: Transcription termination factor FttA (634 aa).

The segment at 4 to 69 is KHa; that stretch reads EEVLENIRKE…ISIRPDPSVL (66 aa). The KHb stretch occupies residues 70 to 137; the sequence is VEPEIAKQKI…WAPKPVRTPP (68 aa). The tract at residues 179–381 is metallo-beta-lactamase N-terminus; sequence WIRVSFLGGA…LIIESTYGAY (203 aa). Residues His240, His242, Asp244, His245, His327, and Asp350 each coordinate Zn(2+). The beta-Casp stretch occupies residues 382–575; the sequence is DDVLPEREEA…LQVYTIEGFS (194 aa). A metallo-beta-lactamase C-terminus region spans residues 576–634; the sequence is GHSDRKQLIKYIRRLKPSPEKIIMVHGEESKCLDFADTVRRLFKKQTYVPMNLDAIRVK. His601 contacts Zn(2+).

This sequence belongs to the metallo-beta-lactamase superfamily. RNA-metabolizing metallo-beta-lactamase-like family. FttA subfamily. As to quaternary structure, homodimer. Interacts with RNA polymerase (RNAP), interacts with the Spt4-Spt5 complex. It depends on Zn(2+) as a cofactor.

Optimal NaCl concentration is 100 mM for nuclease activity on RNA. In terms of biological role, terminates transcription on the whole genome. Termination is linked to FttA-mediated RNA cleavage and does not require NTP hydrolysis. Cleaves endonucleolytically at the RNA exit channel of RNA polymerase (RNAP); the 5'-3' exonuclease activity of this protein degrades the nascent RNA released from RNAP. An endoribonuclease with no apparent exonuclease activity, has low activity on single-stranded DNA (endodeoxyribonuclease, endoDNase). The sequence is that of Transcription termination factor FttA from Methanocaldococcus jannaschii (strain ATCC 43067 / DSM 2661 / JAL-1 / JCM 10045 / NBRC 100440) (Methanococcus jannaschii).